A 546-amino-acid chain; its full sequence is Glucose-6-phosphate isomerase (546 aa).

Residue glutamate 352 is the Proton donor of the active site. Catalysis depends on residues histidine 383 and lysine 511.

It belongs to the GPI family.

It localises to the cytoplasm. The catalysed reaction is alpha-D-glucose 6-phosphate = beta-D-fructose 6-phosphate. Its pathway is carbohydrate biosynthesis; gluconeogenesis. It participates in carbohydrate degradation; glycolysis; D-glyceraldehyde 3-phosphate and glycerone phosphate from D-glucose: step 2/4. Catalyzes the reversible isomerization of glucose-6-phosphate to fructose-6-phosphate. This Paramagnetospirillum magneticum (strain ATCC 700264 / AMB-1) (Magnetospirillum magneticum) protein is Glucose-6-phosphate isomerase.